Reading from the N-terminus, the 368-residue chain is FAD-dependent monooxygenase phomE (368 aa).

Position 11 (A11) interacts with FAD. Residues R140 and Y178 contribute to the active site. FAD is bound by residues D249 and G262.

This sequence belongs to the paxM FAD-dependent monooxygenase family. As to quaternary structure, monomer. FAD is required as a cofactor.

Functionally, FAD-dependent monooxygenase; part of the gene cluster that mediates the biosynthesis of the phomopsins, a group of hexapeptide mycotoxins which infects lupins and causes lupinosis disease in livestock. The role of phomE within the phomopsins biosynthesis pathway has still to be determined. The pathway starts with the processing of the precursor phomA by several endopeptidases including kexin proteases as well as the cluster-specific S41 family peptidase phomP1 and the oligopeptidase phomG to produce 10 identical copies of the hexapeptide Tyr-Val-Ile-Pro-Ile-Asp. After being excised from the precursor peptide, the core peptides are cyclized and modified post-translationally by enzymes encoded within the gene cluster. The timing and order of proteolysis of the phomA precursor and PTMs are still unknown. Two tyrosinase-like enzymes, phomQ1 and phomQ2, catalyze the chlorination and hydroxylation of Tyr, respectively. PhomYb, is proposed to be involved in the construction of the macrocyclic structure. The other 4 ustYa family proteins may be involved in PTMs that generate the unique structure of phomopsin A. PhomYa is required for the hydroxylation of C-beta of Tyr. PhomYc, phomYd, and phomYe are responsible for the biosynthesis of 2,3-dehydroisoleucine (dIle), 2,3-dehydroaspartic acid (dAsp), and 3,4-dehydroproline (dPro), respectively. While dIle formation by phomYc is indispensable for the installation of dAsp by phomYd, the order of the other PTMs have not been elucidated yet. Most of the biosynthetic enzymes likely have broad substrate specificity, and thus, there might be a metabolic grid from a precursor to phomopsin A. The enzyme(s) responsible for the biosynthesis of 3,4-dehydrovaline (dVal) have also not been identified yet. Finally, phomM acts as an S-adenosylmethionine-dependent alpha-N-methyltransferase that catalyzes two successive N-methylation reactions, converting N-desmethyl-phomopsin A to phomopsin A and phomopsin A further to an N,N-dimethylated congener called phomopsin E. This chain is FAD-dependent monooxygenase phomE, found in Diaporthe leptostromiformis (Lupinosis disease fungus).